We begin with the raw amino-acid sequence, 320 residues long: Taste receptor type 2 member 109 (320 aa).

Residues 1–14 (MEHFLKSIFDISKN) are Extracellular-facing. The helical transmembrane segment at 15-35 (VLPIILFIELIIGIIGNGFMA) threads the bilayer. The Cytoplasmic portion of the chain corresponds to 36–62 (LVHCMDWVKRKKMSLVNQILTTLATSR). Residues 63–83 (ICLLWFMLLGLLITLLDPDLA) form a helical membrane-spanning segment. Residues 84-94 (SARMMIQVASN) lie on the Extracellular side of the membrane. The chain crosses the membrane as a helical span at residues 95–115 (LWIIANHMSIWLATCLTVFYF). The Cytoplasmic portion of the chain corresponds to 116–135 (LKIANFSSSLFLYLKWRVEK). A helical transmembrane segment spans residues 136-156 (VISVIFLVSLVLLFLNMLLMN). Over 157–191 (LENDMCIAEYHQINISYSFIYHYRADCERRVLRLH) the chain is Extracellular. An N-linked (GlcNAc...) asparagine glycan is attached at Asn170. Residues 192-212 (IIILSVPFVLSLPTFLLLIFS) form a helical membrane-spanning segment. Residues 213–240 (LWTHHKKMQQHVQGRRDASTTAHFKALQ) are Cytoplasmic-facing. Residues 241 to 261 (TVIAFLLLYCIFILSMLLQFW) traverse the membrane as a helical segment. Residues 262–270 (KYELMKKPL) lie on the Extracellular side of the membrane. Residues 271–291 (FILFCHIVYGAFPSFHSYVLI) form a helical membrane-spanning segment. Topologically, residues 292–320 (LGDMKLRQASLSVLLWLKCRPNYIETLDL) are cytoplasmic.

Belongs to the G-protein coupled receptor T2R family.

Its subcellular location is the membrane. Functionally, putative taste receptor which may play a role in the perception of bitterness. The polypeptide is Taste receptor type 2 member 109 (Rattus norvegicus (Rat)).